We begin with the raw amino-acid sequence, 60 residues long: Large ribosomal subunit protein bL33 (60 aa).

It belongs to the bacterial ribosomal protein bL33 family.

The sequence is that of Large ribosomal subunit protein bL33 from Chlorobium limicola (strain DSM 245 / NBRC 103803 / 6330).